A 485-amino-acid polypeptide reads, in one-letter code: Glutamyl-tRNA(Gln) amidotransferase subunit A (485 aa).

Residues Lys-82 and Ser-157 each act as charge relay system in the active site. The active-site Acyl-ester intermediate is the Ser-181.

Belongs to the amidase family. GatA subfamily. Heterotrimer of A, B and C subunits.

The catalysed reaction is L-glutamyl-tRNA(Gln) + L-glutamine + ATP + H2O = L-glutaminyl-tRNA(Gln) + L-glutamate + ADP + phosphate + H(+). Functionally, allows the formation of correctly charged Gln-tRNA(Gln) through the transamidation of misacylated Glu-tRNA(Gln) in organisms which lack glutaminyl-tRNA synthetase. The reaction takes place in the presence of glutamine and ATP through an activated gamma-phospho-Glu-tRNA(Gln). In Treponema denticola (strain ATCC 35405 / DSM 14222 / CIP 103919 / JCM 8153 / KCTC 15104), this protein is Glutamyl-tRNA(Gln) amidotransferase subunit A.